We begin with the raw amino-acid sequence, 199 residues long: GTP cyclohydrolase-2 (199 aa).

Residue 52-56 participates in GTP binding; it reads RMHSE. Cys57, Cys68, and Cys70 together coordinate Zn(2+). Residues Gln73, 94–96, and Thr116 contribute to the GTP site; that span reads EGR. The active-site Proton acceptor is the Asp128. Arg130 functions as the Nucleophile in the catalytic mechanism. The GTP site is built by Thr151 and Lys156.

Belongs to the GTP cyclohydrolase II family. Requires Zn(2+) as cofactor.

It carries out the reaction GTP + 4 H2O = 2,5-diamino-6-hydroxy-4-(5-phosphoribosylamino)-pyrimidine + formate + 2 phosphate + 3 H(+). The protein operates within cofactor biosynthesis; riboflavin biosynthesis; 5-amino-6-(D-ribitylamino)uracil from GTP: step 1/4. Functionally, catalyzes the conversion of GTP to 2,5-diamino-6-ribosylamino-4(3H)-pyrimidinone 5'-phosphate (DARP), formate and pyrophosphate. The sequence is that of GTP cyclohydrolase-2 from Aliivibrio fischeri (strain MJ11) (Vibrio fischeri).